An 836-amino-acid polypeptide reads, in one-letter code: Probable serine/threonine-protein kinase dyrk1 (836 aa).

The span at 99–278 shows a compositional bias: low complexity; the sequence is QQQYQQQHNN…SSNNNNNNKQ (180 aa). The interval 99–286 is disordered; the sequence is QQQYQQQHNN…KQSKYNDGYD (188 aa). The Protein kinase domain maps to 304-624; sequence FEIISSLGKG…PLEALQHSFF (321 aa). ATP contacts are provided by residues 310–318 and Lys-333; that span reads LGKGSFGQV. The active-site Proton acceptor is the Asp-432. Disordered stretches follow at residues 627–697, 718–767, and 785–836; these read DETS…QQQQ, TYSP…INSN, and NIYN…NNNI. Positions 630-697 are enriched in low complexity; it reads SQPPQQQSQQ…QQLQQQQQQQ (68 aa). Residues 718–728 show a composition bias toward polar residues; the sequence is TYSPTTQQSNH. Residues 729–744 show a composition bias toward basic and acidic residues; that stretch reads KLVDQMKKASMKDKSP. A compositionally biased stretch (low complexity) spans 785–816; sequence NIYNNNNNNNNNNNNNNNNNNSNNYNNSNELS.

This sequence belongs to the protein kinase superfamily. CMGC Ser/Thr protein kinase family. MNB/DYRK subfamily.

The catalysed reaction is L-seryl-[protein] + ATP = O-phospho-L-seryl-[protein] + ADP + H(+). It catalyses the reaction L-threonyl-[protein] + ATP = O-phospho-L-threonyl-[protein] + ADP + H(+). It carries out the reaction L-tyrosyl-[protein] + ATP = O-phospho-L-tyrosyl-[protein] + ADP + H(+). In Dictyostelium discoideum (Social amoeba), this protein is Probable serine/threonine-protein kinase dyrk1 (dyrk1).